A 437-amino-acid chain; its full sequence is Epsilon-sarcoglycan (437 aa).

The Extracellular segment spans residues 1-317 (MLLFWWWELG…LKSRDYYTDF (317 aa)). An N-linked (GlcNAc...) asparagine glycan is attached at N200. The helical transmembrane segment at 318–338 (LVTLAVPSAVALVLFLILAYI) threads the bilayer. Residues 339–437 (MCCRREGVEK…QQQTTGKWYP (99 aa)) lie on the Cytoplasmic side of the membrane.

It belongs to the sarcoglycan alpha/epsilon family. Post-translationally, N-glycosylated. In terms of processing, ubiquitinated, leading to its degradation by the proteasome. In both neural tissues including cerebellar cortex, striatum, cerebral cortex, thalamus and hippocampus, and non-neural tissues including quadriceps muscle, liver, kidney, spleen, lung, testis and heart. Widely distributed in the brain, with a robust signal obtained from regions with dense neuronal packing such as the pyramidal cell layer of the hippocampus, cerebellar molecular layer, and cerebral cortex. Levels are highest in kidney, moderate in brain and lung, and low in skeletal muscle, liver, spleen and testis.

It localises to the cell membrane. Its subcellular location is the sarcolemma. The protein localises to the cytoplasm. It is found in the cytoskeleton. The protein resides in the cell projection. It localises to the dendrite. Its subcellular location is the golgi apparatus. Component of the sarcoglycan complex, a subcomplex of the dystrophin-glycoprotein complex which forms a link between the F-actin cytoskeleton and the extracellular matrix. This chain is Epsilon-sarcoglycan, found in Rattus norvegicus (Rat).